Here is a 91-residue protein sequence, read N- to C-terminus: Phosphocarrier protein NPr (91 aa).

Residues 3–90 form the HPr domain; that stretch reads KLERQVTICN…ALVDAKFDEA (88 aa). His-17 functions as the Pros-phosphohistidine intermediate in the catalytic mechanism.

The protein belongs to the HPr family.

It localises to the cytoplasm. Functionally, component of the phosphoenolpyruvate-dependent nitrogen-metabolic phosphotransferase system (nitrogen-metabolic PTS), that seems to be involved in regulating nitrogen metabolism. The phosphoryl group from phosphoenolpyruvate (PEP) is transferred to the phosphoryl carrier protein NPr by enzyme I-Ntr. Phospho-NPr then transfers it to EIIA-Ntr. Could function in the transcriptional regulation of sigma-54 dependent operons in conjunction with the NPr (PtsO) and EIIA-Ntr (PtsN) proteins. The protein is Phosphocarrier protein NPr (ptsO) of Shewanella violacea (strain JCM 10179 / CIP 106290 / LMG 19151 / DSS12).